The following is a 415-amino-acid chain: Corticotropin-releasing factor receptor 1 (415 aa).

Residues 1–23 (MGRRPQLRLVKALLLLGLNSISA) form the signal peptide. Residues 24 to 111 (SLQDQHCESL…CQEILSEGEK (88 aa)) are Extracellular-facing. 3 disulfide bridges follow: Cys-30–Cys-54, Cys-44–Cys-87, and Cys-68–Cys-102. Residues Asn-38, Asn-45, Asn-51, Asn-78, Asn-90, and Asn-98 are each glycosylated (N-linked (GlcNAc...) asparagine). An important for peptide agonist binding region spans residues 99 to 108 (HSECQEILSE). The helical transmembrane segment at 112 to 142 (SKAHYHIAVIINYLGHCISLAALLVAFVLFL) threads the bilayer. Residues 143–149 (RLRSIRC) lie on the Cytoplasmic side of the membrane. The helical transmembrane segment at 150-174 (VRNIIHWNLISAFILRNATWFVVQL) threads the bilayer. The Extracellular portion of the chain corresponds to 175–189 (TMSPEVHQSNVGWCR). Cys-188 and Cys-258 are joined by a disulfide. A helical membrane pass occupies residues 190 to 218 (LVTAAYNYFHVTNFFWMFGEGCYLHTAVV). The Cytoplasmic portion of the chain corresponds to 219-225 (LTYSTDR). A helical transmembrane segment spans residues 226–253 (LRKWMFICIGWGVPFPIIVAWAIGKLYY). Residues 254 to 269 (DNEKCWFGKRPGVYTD) are Extracellular-facing. A helical transmembrane segment spans residues 270 to 295 (YIYQGPMILVLLINFIFLFNIVRILM). The interval 280 to 290 (LLINFIFLFNI) is important for antagonist binding. Over 296 to 306 (TKLRASTTSET) the chain is Cytoplasmic. Ser-301 carries the phosphoserine; by PKA modification. A helical membrane pass occupies residues 307 to 331 (IQYRKAVKATLVLLPLLGITYMLFF). Topologically, residues 332 to 338 (VNPGEDE) are extracellular. Residues 339 to 368 (VSRVVFIYFNSFLESFQGFFVSVFYCFLNS) traverse the membrane as a helical segment. The Cytoplasmic segment spans residues 369-415 (EVRSAIRKRWHRWQDKHSIRARVARAMSIPTSPTRVSFHSIKQSTAV).

The protein belongs to the G-protein coupled receptor 2 family. Heterodimer; heterodimerizes with GPER1. Interacts (via N-terminal extracellular domain) with CRH and UCN. Interacts with DLG1; this inhibits endocytosis of CRHR1 after agonist binding. C-terminal Ser or Thr residues may be phosphorylated. In terms of processing, phosphorylation at Ser-301 by PKA prevents maximal coupling to Gq-protein, and thereby negatively regulates downstream signaling.

Its subcellular location is the cell membrane. The protein localises to the endosome. Its function is as follows. G-protein coupled receptor for CRH (corticotropin-releasing factor) and UCN (urocortin). Has high affinity for CRH and UCN. Ligand binding causes a conformation change that triggers signaling via guanine nucleotide-binding proteins (G proteins) and down-stream effectors, such as adenylate cyclase. Promotes the activation of adenylate cyclase, leading to increased intracellular cAMP levels. Inhibits the activity of the calcium channel CACNA1H. Required for normal embryonic development of the adrenal gland and for normal hormonal responses to stress. Plays a role in the response to anxiogenic stimuli. This is Corticotropin-releasing factor receptor 1 (CRHR1) from Ovis aries (Sheep).